The following is a 202-amino-acid chain: Large ribosomal subunit protein bL9 (202 aa).

The segment at 168 to 202 (DEAGFTEDYDPNAEPGEIPTELQDEAPAAEATDEA) is disordered. The segment covering 192–202 (EAPAAEATDEA) has biased composition (low complexity).

Belongs to the bacterial ribosomal protein bL9 family.

Functionally, binds to the 23S rRNA. This Rhizorhabdus wittichii (strain DSM 6014 / CCUG 31198 / JCM 15750 / NBRC 105917 / EY 4224 / RW1) (Sphingomonas wittichii) protein is Large ribosomal subunit protein bL9.